We begin with the raw amino-acid sequence, 101 residues long: Large ribosomal subunit protein bL20 (101 aa).

It belongs to the bacterial ribosomal protein bL20 family.

Binds directly to 23S ribosomal RNA and is necessary for the in vitro assembly process of the 50S ribosomal subunit. It is not involved in the protein synthesizing functions of that subunit. The protein is Large ribosomal subunit protein bL20 (rplT) of Carsonella ruddii (strain PV).